Here is a 257-residue protein sequence, read N- to C-terminus: Probable 6-phosphogluconolactonase (257 aa).

This sequence belongs to the glucosamine/galactosamine-6-phosphate isomerase family. 6-phosphogluconolactonase subfamily.

The catalysed reaction is 6-phospho-D-glucono-1,5-lactone + H2O = 6-phospho-D-gluconate + H(+). It participates in carbohydrate degradation; pentose phosphate pathway; D-ribulose 5-phosphate from D-glucose 6-phosphate (oxidative stage): step 2/3. In terms of biological role, hydrolysis of 6-phosphogluconolactone to 6-phosphogluconate. The sequence is that of Probable 6-phosphogluconolactonase from Schizosaccharomyces pombe (strain 972 / ATCC 24843) (Fission yeast).